Here is a 305-residue protein sequence, read N- to C-terminus: Ribonuclease BN (305 aa).

The Zn(2+) site is built by His64, His66, Asp68, His69, His141, Asp212, and His270. Catalysis depends on Asp68, which acts as the Proton acceptor.

This sequence belongs to the RNase Z family. RNase BN subfamily. In terms of assembly, homodimer. Requires Zn(2+) as cofactor.

In terms of biological role, zinc phosphodiesterase, which has both exoribonuclease and endoribonuclease activities. This Salmonella agona (strain SL483) protein is Ribonuclease BN.